A 598-amino-acid polypeptide reads, in one-letter code: MPCIQAQYGTPAPSPGPRDHLAGDLLTPELSKPTMDLASPEAAPAVPTALPSFSTFMDGYTGEFDTFLYQLSGTAQPCSSASSSASSTSSSSATSPASASFKFEDFQVYGCYPGTLSGPLDETLSSSGSDYYGSPCSAPSPSTPSFQPPQLSPWDGSFGPFSPSQTYEGLRAWTEQLPKASGPPQPPAFFSFSPPPGPSPSLAPSPLKLFPSQAAHQLGEGESYSMQTAFPGLVPTSPHLDGSGRLDAPVTSAKARSGAPGGSEGRCAVCGDNASCQHYGVRTCEGCKGFFKRTVQKNAKYICLANKDCPVDKRRRNRCQFCRFQKCLAVGMVKEVVRTDSLKGRRGRLPSKPKQPPETSPAHLLTSLVRAHLDSGPSTSKLDYSKFQELALPHFGKEDAGDVQQFYDLLSGSLEVIRKWAEKIPGFAELSPGDQDLLLESAFLELFILRLAYRSKPAEGKLIFCSGLVLHRLQCARGFGDWIDSILAFSRSLHSLVVDIPAFACLSALVLITDRHGLQEPRRVEELQNRIASCLKEHVSAEAGEPQPASCLSRLLGKLPELRTLCTQGLQRIFYLKLEDLVPPPPIVDKIFMDTLPF.

2 disordered regions span residues 1–43 (MPCI…PEAA) and 128–151 (GSDY…PPQL). Residues 134–145 (SPCSAPSPSTPS) are compositionally biased toward low complexity. Residues 171–466 (RAWTEQLPKA…PAEGKLIFCS (296 aa)) are required for nuclear import. Residues 264–339 (EGRCAVCGDN…VGMVKEVVRT (76 aa)) constitute a DNA-binding region (nuclear receptor). 2 consecutive NR C4-type zinc fingers follow at residues 267–287 (CAVC…CEGC) and 303–327 (CLAN…FQKC). A required for binding NBRE-containing DNA region spans residues 268–354 (AVCGDNASCQ…RRGRLPSKPK (87 aa)). The segment at 299 to 361 (AKYICLANKD…KPKQPPETSP (63 aa)) is required for the interaction with RXRA. At S341 the chain carries Phosphoserine; by PKA. The disordered stretch occupies residues 341 to 361 (SLKGRRGRLPSKPKQPPETSP). Residue S351 is modified to Phosphoserine; by PKA, RPS6KA1 and RPS6KA3. One can recognise an NR LBD domain in the interval 360–595 (SPAHLLTSLV…PIVDKIFMDT (236 aa)). The tract at residues 521–544 (PRRVEELQNRIASCLKEHVSAEAG) is binds lipopolysaccharide. An AF-2 region spans residues 584–595 (PPPIVDKIFMDT).

Belongs to the nuclear hormone receptor family. NR4 subfamily. As to quaternary structure, binds the NGFI-B response element (NBRE) as a monomer. Binds the Nur response element (NurRE), consisting of two inverse NBRE-related octanucleotide repeats separated by 6 base-pairs, as a dimer. Interacts (via N-terminus) with NLRP3 (via LRR repeat domain); the interaction is direct, requires binding of NR4A1/Nur77 to NBRE-containing dsDNA and lipopolysaccharide, and leads to non-canonical NLRP3 inflammasome activation. Interacts with GADD45GIP1. Interacts with STK11. Interacts with IFI27. Heterodimer (via DNA-binding domain) with RXRA (via C-terminus); DNA-binding of the heterodimer is enhanced by 9-cis retinoic acid. Competes for the RXRA interaction with EP300 and thereby attenuates EP300 mediated acetylation of RXRA. Interacts with NCOA1. Interacts with NCOA2. Interacts with NCOA3. Zn(2+) serves as cofactor. Phosphorylated at Ser-351 by RPS6KA1 and RPS6KA3 in response to mitogenic or stress stimuli. Post-translationally, acetylated by p300/CBP, acetylation increases stability. Deacetylated by HDAC1.

Its subcellular location is the nucleus. It is found in the cytoplasm. It localises to the cytosol. The protein localises to the mitochondrion. Functionally, orphan nuclear receptor. Binds the NGFI-B response element (NBRE) 5'-AAAGGTCA-3'. Binds 9-cis-retinoic acid outside of its ligand-binding (NR LBD) domain. Participates in energy homeostasis by sequestrating the kinase STK11 in the nucleus, thereby attenuating cytoplasmic AMPK activation. Regulates the inflammatory response in macrophages by regulating metabolic adaptations during inflammation, including repressing the transcription of genes involved in the citric acid cycle (TCA). Inhibits NF-kappa-B signaling by binding to low-affinity NF-kappa-B binding sites, such as at the IL2 promoter. May act concomitantly with NR4A2 in regulating the expression of delayed-early genes during liver regeneration. Plays a role in the vascular response to injury. In the cytosol, upon its detection of both bacterial lipopolysaccharide (LPS) and NBRE-containing mitochondrial DNA released by GSDMD pores during pyroptosis, it promotes non-canonical NLRP3 inflammasome activation by stimulating association of NLRP3 and NEK7. In Bos taurus (Bovine), this protein is Nuclear receptor subfamily 4 group A member 1 (NR4A1).